The chain runs to 375 residues: Anhydro-N-acetylmuramic acid kinase (375 aa).

19-26 (GTSLDGVD) provides a ligand contact to ATP.

The protein belongs to the anhydro-N-acetylmuramic acid kinase family.

It carries out the reaction 1,6-anhydro-N-acetyl-beta-muramate + ATP + H2O = N-acetyl-D-muramate 6-phosphate + ADP + H(+). Its pathway is amino-sugar metabolism; 1,6-anhydro-N-acetylmuramate degradation. The protein operates within cell wall biogenesis; peptidoglycan recycling. In terms of biological role, catalyzes the specific phosphorylation of 1,6-anhydro-N-acetylmuramic acid (anhMurNAc) with the simultaneous cleavage of the 1,6-anhydro ring, generating MurNAc-6-P. Is required for the utilization of anhMurNAc either imported from the medium or derived from its own cell wall murein, and thus plays a role in cell wall recycling. The chain is Anhydro-N-acetylmuramic acid kinase from Ruegeria sp. (strain TM1040) (Silicibacter sp.).